Here is a 305-residue protein sequence, read N- to C-terminus: Methionyl-tRNA formyltransferase (305 aa).

A (6S)-5,6,7,8-tetrahydrofolate-binding site is contributed by 109 to 112 (SLLP).

It belongs to the Fmt family.

The catalysed reaction is L-methionyl-tRNA(fMet) + (6R)-10-formyltetrahydrofolate = N-formyl-L-methionyl-tRNA(fMet) + (6S)-5,6,7,8-tetrahydrofolate + H(+). Attaches a formyl group to the free amino group of methionyl-tRNA(fMet). The formyl group appears to play a dual role in the initiator identity of N-formylmethionyl-tRNA by promoting its recognition by IF2 and preventing the misappropriation of this tRNA by the elongation apparatus. This chain is Methionyl-tRNA formyltransferase, found in Paramagnetospirillum magneticum (strain ATCC 700264 / AMB-1) (Magnetospirillum magneticum).